A 406-amino-acid polypeptide reads, in one-letter code: 4-O-methyl-glucuronoyl methylesterase (406 aa).

The N-terminal stretch at 1-17 (MAFRWLSFLLLALPVLA) is a signal peptide. Cys31 and Cys64 are oxidised to a cystine. Residues Asn100, Asn110, Asn122, and Asn178 are each glycosylated (N-linked (GlcNAc...) asparagine). The short motif at 215-220 (GCSRDG) is the GXSYXG catalytic site motif element. Disulfide bonds link Cys216–Cys352 and Cys248–Cys324. The Nucleophile role is filled by Ser217. Substrate is bound by residues Lys221, Gln263, and Glu271. Asn285 carries N-linked (GlcNAc...) asparagine glycosylation. Trp315 contacts substrate. An N-linked (GlcNAc...) asparagine glycan is attached at Asn348. The active-site Proton donor/acceptor is the His351. Asn376, Asn387, and Asn398 each carry an N-linked (GlcNAc...) asparagine glycan.

The protein belongs to the carbohydrate esterase 15 (CE15) family.

Its subcellular location is the secreted. It catalyses the reaction a 4-O-methyl-alpha-D-glucuronosyl ester derivative + H2O = 4-O-methyl-alpha-D-glucuronate derivative + an alcohol + H(+). Glucuronoyl esterase which may play a significant role in biomass degradation, as it is considered to disconnect hemicellulose from lignin through the hydrolysis of the ester bond between 4-O-methyl-D-glucuronic acid residues of glucuronoxylans and aromatic alcohols of lignin. The sequence is that of 4-O-methyl-glucuronoyl methylesterase from Phanerochaete carnosa (strain HHB-10118-sp) (White-rot fungus).